We begin with the raw amino-acid sequence, 102 residues long: Protein translation factor SUI1 homolog (102 aa).

Belongs to the SUI1 family.

The chain is Protein translation factor SUI1 homolog from Methanosarcina mazei (strain ATCC BAA-159 / DSM 3647 / Goe1 / Go1 / JCM 11833 / OCM 88) (Methanosarcina frisia).